A 228-amino-acid polypeptide reads, in one-letter code: Interleukin-27 subunit beta (228 aa).

The N-terminal stretch at 1-18 is a signal peptide; it reads MSKLLFLSLALWASRSPG. 2 Fibronectin type-III domains span residues 26 to 124 and 127 to 224; these read ALSQ…VAER and KPDP…VESA. Asn54 and Asn104 each carry an N-linked (GlcNAc...) asparagine glycan.

The protein belongs to the type I cytokine receptor family. Type 3 subfamily. Heterodimer with IL27/IL27A; not disulfide-linked. This heterodimer is known as interleukin IL-27. Heterodimer with IL12A; not disulfide-linked. This heterodimer is known as interleukin IL-35. Interacts with SQSTM1.

The protein resides in the secreted. Its function is as follows. Associates with IL27 to form the IL-27 interleukin, a heterodimeric cytokine which functions in innate immunity. IL-27 has pro- and anti-inflammatory properties, that can regulate T-helper cell development, suppress T-cell proliferation, stimulate cytotoxic T-cell activity, induce isotype switching in B-cells, and that has diverse effects on innate immune cells. Among its target cells are CD4 T-helper cells which can differentiate in type 1 effector cells (TH1), type 2 effector cells (TH2) and IL17 producing helper T-cells (TH17). It drives rapid clonal expansion of naive but not memory CD4 T-cells. It also strongly synergizes with IL-12 to trigger interferon-gamma/IFN-gamma production of naive CD4 T-cells, binds to the cytokine receptor WSX-1/TCCR. Another important role of IL-27 is its antitumor activity as well as its antiangiogenic activity with activation of production of antiangiogenic chemokines. The polypeptide is Interleukin-27 subunit beta (Ebi3) (Mus musculus (Mouse)).